The chain runs to 250 residues: Phosphonates import ATP-binding protein PhnC (250 aa).

Residues 2–247 (IVFNNVNKVW…KLDAQAMKKI (246 aa)) enclose the ABC transporter domain. An ATP-binding site is contributed by 35-42 (GLSGAGKT).

The protein belongs to the ABC transporter superfamily. Phosphonates importer (TC 3.A.1.9.1) family. The complex is composed of two ATP-binding proteins (PhnC), two transmembrane proteins (PhnE) and a solute-binding protein (PhnD).

The protein resides in the cell membrane. It carries out the reaction phosphonate(out) + ATP + H2O = phosphonate(in) + ADP + phosphate + H(+). Part of the ABC transporter complex PhnCDE involved in phosphonates import. Responsible for energy coupling to the transport system. This chain is Phosphonates import ATP-binding protein PhnC, found in Mycoplasma mycoides subsp. mycoides SC (strain CCUG 32753 / NCTC 10114 / PG1).